We begin with the raw amino-acid sequence, 153 residues long: Putative pre-16S rRNA nuclease (153 aa).

This sequence belongs to the YqgF nuclease family.

The protein resides in the cytoplasm. Functionally, could be a nuclease involved in processing of the 5'-end of pre-16S rRNA. This is Putative pre-16S rRNA nuclease from Chloroflexus aurantiacus (strain ATCC 29366 / DSM 635 / J-10-fl).